The primary structure comprises 134 residues: Large ribosomal subunit protein uL16c (134 aa).

A compositionally biased stretch (basic residues) spans 1–17 (MLSPKRTRFRKQHRGRM). The disordered stretch occupies residues 1-22 (MLSPKRTRFRKQHRGRMKGISS).

It belongs to the universal ribosomal protein uL16 family. In terms of assembly, part of the 50S ribosomal subunit.

The protein resides in the plastid. It is found in the chloroplast. This is Large ribosomal subunit protein uL16c from Solanum tuberosum (Potato).